Reading from the N-terminus, the 416-residue chain is UDP-N-acetylmuramoylalanine--D-glutamate ligase (416 aa).

Residue 104–110 (GSNGKST) participates in ATP binding.

The protein belongs to the MurCDEF family.

It is found in the cytoplasm. It catalyses the reaction UDP-N-acetyl-alpha-D-muramoyl-L-alanine + D-glutamate + ATP = UDP-N-acetyl-alpha-D-muramoyl-L-alanyl-D-glutamate + ADP + phosphate + H(+). It functions in the pathway cell wall biogenesis; peptidoglycan biosynthesis. Cell wall formation. Catalyzes the addition of glutamate to the nucleotide precursor UDP-N-acetylmuramoyl-L-alanine (UMA). This is UDP-N-acetylmuramoylalanine--D-glutamate ligase from Francisella tularensis subsp. tularensis (strain FSC 198).